The following is a 322-amino-acid chain: CRISPR-associated endonuclease Cas1 (322 aa).

Positions 149, 214, and 229 each coordinate Mn(2+).

The protein belongs to the CRISPR-associated endonuclease Cas1 family. Homodimer, forms a heterotetramer with a Cas2 homodimer. The cofactor is Mg(2+). Mn(2+) is required as a cofactor.

Its function is as follows. CRISPR (clustered regularly interspaced short palindromic repeat), is an adaptive immune system that provides protection against mobile genetic elements (viruses, transposable elements and conjugative plasmids). CRISPR clusters contain spacers, sequences complementary to antecedent mobile elements, and target invading nucleic acids. CRISPR clusters are transcribed and processed into CRISPR RNA (crRNA). Acts as a dsDNA endonuclease. Involved in the integration of spacer DNA into the CRISPR cassette. The chain is CRISPR-associated endonuclease Cas1 from Methanocaldococcus jannaschii (strain ATCC 43067 / DSM 2661 / JAL-1 / JCM 10045 / NBRC 100440) (Methanococcus jannaschii).